The following is a 21-amino-acid chain: Cutinase 2 (21 aa).

The protein belongs to the cutinase family.

It is found in the secreted. It carries out the reaction cutin + H2O = cutin monomers.. Its activity is regulated as follows. Inhibited by diisopropyl fluorophosphate (DFP). Catalyzes the hydrolysis of complex carboxylic polyesters found in the cell wall of plants. Degrades cutin, a macromolecule that forms the structure of the plant cuticle. Allows pathogenic fungi to penetrate through the cuticular barrier into the host plant during the initial stage of fungal infection. The polypeptide is Cutinase 2 (Colletotrichum gloeosporioides (Anthracnose fungus)).